We begin with the raw amino-acid sequence, 39 residues long: Metallocarboxypeptidase inhibitor (39 aa).

At Gln1 the chain carries Pyrrolidone carboxylic acid. Cystine bridges form between Cys8–Cys24, Cys12–Cys27, and Cys18–Cys34.

Highly concentrated in tubers. Closely related but distinct forms of MCPI are present in leaves, stems and buds.

May play a defensive role against insect attacks. Inhibits A.aegypti carboxypeptidase CPB1. This Solanum tuberosum (Potato) protein is Metallocarboxypeptidase inhibitor.